We begin with the raw amino-acid sequence, 789 residues long: Polyribonucleotide nucleotidyltransferase (789 aa).

Mg(2+) contacts are provided by aspartate 494 and aspartate 500. Residues 561 to 620 (PRIESIFINKDKIRNVIGSGGKNIREICEKTGARVEIMQDGTVMIYAINNDAVEYAKNMI) enclose the KH domain. The 68-residue stretch at 630 to 697 (GKVFDGTVIE…DREYVQLSMR (68 aa)) folds into the S1 motif domain. The disordered stretch occupies residues 709–789 (GELYNIRKTN…NEVPRKPRFF (81 aa)). Residues 737-749 (SEKKRRGSGRSRR) are compositionally biased toward basic residues. Residues 763–780 (NNGFGNGNRSFNDNRNGN) are compositionally biased toward low complexity.

The protein belongs to the polyribonucleotide nucleotidyltransferase family. Mg(2+) serves as cofactor.

The protein resides in the cytoplasm. The catalysed reaction is RNA(n+1) + phosphate = RNA(n) + a ribonucleoside 5'-diphosphate. Involved in mRNA degradation. Catalyzes the phosphorolysis of single-stranded polyribonucleotides processively in the 3'- to 5'-direction. This chain is Polyribonucleotide nucleotidyltransferase, found in Ehrlichia ruminantium (strain Gardel).